The primary structure comprises 264 residues: Undecaprenyl-diphosphatase (264 aa).

7 helical membrane passes run 38–58 (RSDFFNIVIQAGAIVAVVLVF), 75–95 (REYVFKLGAAFLVTAVVGLVV), 106–126 (VSPVAWALIIGGIWMLLVEAY), 136–156 (VTWTVAIGVGLAQVVAGVFPG), 181–201 (FVFLVGIPTMFAASAYTFLEM), 217–237 (VAFLAAAVTGFVVVKWLMGYI), and 242–262 (FTAFALYRIALGAALLLWLPS).

Belongs to the UppP family.

Its subcellular location is the cell inner membrane. It catalyses the reaction di-trans,octa-cis-undecaprenyl diphosphate + H2O = di-trans,octa-cis-undecaprenyl phosphate + phosphate + H(+). Functionally, catalyzes the dephosphorylation of undecaprenyl diphosphate (UPP). Confers resistance to bacitracin. In Stenotrophomonas maltophilia (strain R551-3), this protein is Undecaprenyl-diphosphatase.